The sequence spans 513 residues: ATP synthase subunit alpha (513 aa).

169–176 (GDRQCGKT) lines the ATP pocket.

This sequence belongs to the ATPase alpha/beta chains family. F-type ATPases have 2 components, CF(1) - the catalytic core - and CF(0) - the membrane proton channel. CF(1) has five subunits: alpha(3), beta(3), gamma(1), delta(1), epsilon(1). CF(0) has three main subunits: a(1), b(2) and c(9-12). The alpha and beta chains form an alternating ring which encloses part of the gamma chain. CF(1) is attached to CF(0) by a central stalk formed by the gamma and epsilon chains, while a peripheral stalk is formed by the delta and b chains.

The protein resides in the cell inner membrane. The catalysed reaction is ATP + H2O + 4 H(+)(in) = ADP + phosphate + 5 H(+)(out). In terms of biological role, produces ATP from ADP in the presence of a proton gradient across the membrane. The alpha chain is a regulatory subunit. This is ATP synthase subunit alpha from Burkholderia orbicola (strain AU 1054).